The primary structure comprises 856 residues: MRVEGIQRNWKQWWIWGILGFWMVMIYNVRGNLWVTVYYGVPVWKEAKTTLFCASDAKAYDAEVHNVWATHACVPTDPNPQEMVLENVTENFNMWENDMVEQMHQDIISLWDQSLKPCVKLTPLCVTLHCSNRTIDYNNRTDNMGGEIKNCSFNMTTEVRDKREKVHALFYRLDIVPLKNESSNTSGDYRLINCNTSAITQACPKVSFDPIPIHYCAPAGYAILKCNNKTFNGTGPCNNVSTIQCTHGTKPVVSTQLLLNGSLAEEEIIIRSKNLTDNVKTIIVHLNESVEINCTRPNNNTRKSIRIGPGQAFYATGEIIGDIRQAHCNISRTAWNKTLQEVGKKLAEHFPNKAIKFAKHSGGDLEITTHSFNCRGEFFYCNTSSLFNSTYTPNSTENITGTENSIITIPCRIKQIINMWQGVGRAMYAPPIEGILTCRSNITGLLLTRDGGTGMHDTEIFRPEGGDMRDNWRSELYKYKVVEIKPLGIAPTKAKRRVVEREKRAVGIGAVFLGFLGAAGSTMGAASITLTVQVRQLLSGIVQQQSNLLRAIEAQQHMLQLTVWGIKQLQTRVLAIERYLRDQQLLGIWGCSGKLICTTAVPWNSSWSNRSQEDIWNNMTWMQWDREISNYTNTIYRLLEDSQNQQEKNEQDLLALDKWQNLWTWFGITNWLWYIKIFIKIVGGLIGLRIIFAVLSIVNRVRQGYSPLSFQTLTPNPRGPDRLGGIEEEGGEQDRDRSIRLVSGFLALAWDDLRSLCLFSYHRLRDLILIAARAVELLGRSSLRGIQRGWEILKYLGGLVQYWSLELKKSAISLFDTIAIAVAEGTDRIIEVIQGIWRAICNIPRRIRQGFEAALQ.

The first 31 residues, 1–31 (MRVEGIQRNWKQWWIWGILGFWMVMIYNVRG), serve as a signal peptide directing secretion. Topologically, residues 32–677 (NLWVTVYYGV…ITNWLWYIKI (646 aa)) are extracellular. Cysteines 53 and 73 form a disulfide. N-linked (GlcNAc...) asparagine; by host glycosylation is found at asparagine 87, asparagine 132, asparagine 139, asparagine 150, asparagine 154, asparagine 180, asparagine 184, asparagine 195, asparagine 228, asparagine 232, asparagine 239, asparagine 260, asparagine 274, asparagine 287, asparagine 293, asparagine 299, asparagine 329, and asparagine 336. Cystine bridges form between cysteine 118–cysteine 203, cysteine 125–cysteine 194, cysteine 130–cysteine 151, cysteine 216–cysteine 245, and cysteine 226–cysteine 237. A V1 region spans residues 130-150 (CSNRTIDYNNRTDNMGGEIKN). The tract at residues 151–194 (CSFNMTTEVRDKREKVHALFYRLDIVPLKNESSNTSGDYRLINC) is V2. Residues 294–327 (CTRPNNNTRKSIRIGPGQAFYATGEIIGDIRQAH) are V3. Cysteines 294 and 328 form a disulfide. Positions 360 to 370 (HSGGDLEITTH) are CD4-binding loop. 2 disulfides stabilise this stretch: cysteine 374-cysteine 438 and cysteine 381-cysteine 411. The interval 381–411 (CNTSSLFNSTYTPNSTENITGTENSIITIPC) is V4. 5 N-linked (GlcNAc...) asparagine; by host glycosylation sites follow: asparagine 382, asparagine 388, asparagine 394, asparagine 398, and asparagine 441. 2 V5 regions span residues 454–464 (GMHDTEIFRPE) and 456–464 (HDTEIFRPE). Residues 505 to 525 (AVGIGAVFLGFLGAAGSTMGA) form a fusion peptide region. Residues 567–585 (KQLQTRVLAIERYLRDQQL) are immunosuppression. Cysteine 591 and cysteine 597 are disulfide-bonded. Asparagine 604, asparagine 609, asparagine 618, and asparagine 630 each carry an N-linked (GlcNAc...) asparagine; by host glycan. Residues 626–660 (REISNYTNTIYRLLEDSQNQQEKNEQDLLALDKWQ) are a coiled coil. Residues 655–676 (ALDKWQNLWTWFGITNWLWYIK) are MPER; binding to GalCer. Residues 678–698 (FIKIVGGLIGLRIIFAVLSIV) form a helical membrane-spanning segment. Residues 699-856 (NRVRQGYSPL…IRQGFEAALQ (158 aa)) lie on the Cytoplasmic side of the membrane. The YXXL motif; contains endocytosis signal signature appears at 705–708 (YSPL). The interval 712–732 (TLTPNPRGPDRLGGIEEEGGE) is disordered. Cysteine 757 is lipidated: S-palmitoyl cysteine; by host.

The protein belongs to the HIV-1 env protein family. As to quaternary structure, the mature envelope protein (Env) consists of a homotrimer of non-covalently associated gp120-gp41 heterodimers. The resulting complex protrudes from the virus surface as a spike. There seems to be as few as 10 spikes on the average virion. Interacts with host CD4, CCR5 and CXCR4. Gp120 also interacts with the C-type lectins CD209/DC-SIGN and CLEC4M/DC-SIGNR (collectively referred to as DC-SIGN(R)). Gp120 and gp41 interact with GalCer. Gp120 interacts with host ITGA4/ITGB7 complex; on CD4+ T-cells, this interaction results in rapid activation of integrin ITGAL/LFA-1, which facilitates efficient cell-to-cell spreading of HIV-1. Gp120 interacts with cell-associated heparan sulfate; this interaction increases virus infectivity on permissive cells and may be involved in infection of CD4- cells. In terms of assembly, the mature envelope protein (Env) consists of a homotrimer of non-covalently associated gp120-gp41 heterodimers. The resulting complex protrudes from the virus surface as a spike. There seems to be as few as 10 spikes on the average virion. In terms of processing, highly glycosylated by host. The high number of glycan on the protein is reffered to as 'glycan shield' because it contributes to hide protein sequence from adaptive immune system. Post-translationally, palmitoylation of the transmembrane protein and of Env polyprotein (prior to its proteolytic cleavage) is essential for their association with host cell membrane lipid rafts. Palmitoylation is therefore required for envelope trafficking to classical lipid rafts, but not for viral replication. Specific enzymatic cleavages in vivo yield mature proteins. Envelope glycoproteins are synthesized as an inactive precursor that is heavily N-glycosylated and processed likely by host cell furin in the Golgi to yield the mature SU and TM proteins. The cleavage site between SU and TM requires the minimal sequence [KR]-X-[KR]-R. About 2 of the 9 disulfide bonds of gp41 are reduced by P4HB/PDI, following binding to CD4 receptor.

It localises to the virion membrane. The protein resides in the host cell membrane. Its subcellular location is the host endosome membrane. Its function is as follows. Oligomerizes in the host endoplasmic reticulum into predominantly trimers. In a second time, gp160 transits in the host Golgi, where glycosylation is completed. The precursor is then proteolytically cleaved in the trans-Golgi and thereby activated by cellular furin or furin-like proteases to produce gp120 and gp41. Functionally, attaches the virus to the host lymphoid cell by binding to the primary receptor CD4. This interaction induces a structural rearrangement creating a high affinity binding site for a chemokine coreceptor like CXCR4 and/or CCR5. Acts as a ligand for CD209/DC-SIGN and CLEC4M/DC-SIGNR, which are respectively found on dendritic cells (DCs), and on endothelial cells of liver sinusoids and lymph node sinuses. These interactions allow capture of viral particles at mucosal surfaces by these cells and subsequent transmission to permissive cells. HIV subverts the migration properties of dendritic cells to gain access to CD4+ T-cells in lymph nodes. Virus transmission to permissive T-cells occurs either in trans (without DCs infection, through viral capture and transmission), or in cis (following DCs productive infection, through the usual CD4-gp120 interaction), thereby inducing a robust infection. In trans infection, bound virions remain infectious over days and it is proposed that they are not degraded, but protected in non-lysosomal acidic organelles within the DCs close to the cell membrane thus contributing to the viral infectious potential during DCs' migration from the periphery to the lymphoid tissues. On arrival at lymphoid tissues, intact virions recycle back to DCs' cell surface allowing virus transmission to CD4+ T-cells. In terms of biological role, acts as a class I viral fusion protein. Under the current model, the protein has at least 3 conformational states: pre-fusion native state, pre-hairpin intermediate state, and post-fusion hairpin state. During fusion of viral and target intracellular membranes, the coiled coil regions (heptad repeats) assume a trimer-of-hairpins structure, positioning the fusion peptide in close proximity to the C-terminal region of the ectodomain. The formation of this structure appears to drive apposition and subsequent fusion of viral and target cell membranes. Complete fusion occurs in host cell endosomes and is dynamin-dependent, however some lipid transfer might occur at the plasma membrane. The virus undergoes clathrin-dependent internalization long before endosomal fusion, thus minimizing the surface exposure of conserved viral epitopes during fusion and reducing the efficacy of inhibitors targeting these epitopes. Membranes fusion leads to delivery of the nucleocapsid into the cytoplasm. This is Envelope glycoprotein gp160 from Homo sapiens (Human).